Here is a 273-residue protein sequence, read N- to C-terminus: Sanguinarine reductase (273 aa).

S153 functions as the Proton donor in the catalytic mechanism. Residues 157 to 161 (CDPDH) and K175 each bind substrate.

This sequence belongs to the NAD(P)-dependent epimerase/dehydratase family. As to quaternary structure, monomer.

The catalysed reaction is dihydrosanguinarine + NADP(+) = sanguinarine + NADPH. It carries out the reaction dihydrosanguinarine + NAD(+) = sanguinarine + NADH. It catalyses the reaction dihydrochelirubine + NAD(+) = chelirubine + NADH. The enzyme catalyses dihydrochelirubine + NADP(+) = chelirubine + NADPH. Its activity is regulated as follows. Inhibited by iodoacetamide and irreversibly by its product, dihydrosanguinarine. Its function is as follows. Catalyzes the reduction of benzophenanthridines, preferentially sanguinarine, to the corresponding dihydroalkaloids. Involved in detoxifying the phytoalexins produced by plant itself. The sanguinarine produced by intact cells upon elicitation, after excretion and binding to cell wall elements, is rapidly reabsorbed and reduced to the less toxic dihydrosanguinarine. Can work with both NAD(P) or NAD as a hydrogen donor, but at low concentrations, the reaction velocity with NAD(P)H is threefold higher than with NADH. However, chelerythrine shows maximum conversion rates with NADH. The substrate preference is sanguinarine &gt; chelerythrine &gt; chelirubine, macarpine or 10-OH-chelerythrine. No activity with berberine or phenanthridine cations. The chain is Sanguinarine reductase from Eschscholzia californica (California poppy).